The following is a 1444-amino-acid chain: Probable chitinase LysM18 (1444 aa).

LysM domains follow at residues 256-302 and 321-369; these read STVQ…HFCC and TTYT…IICL. The Chitin-binding type-1 domain occupies 382-450; that stretch reads NAECGPQVPG…TNGCISNCGT (69 aa). 4 disulfide bridges follow: cysteine 385-cysteine 413, cysteine 407-cysteine 419, cysteine 412-cysteine 426, and cysteine 444-cysteine 448. Residues 461–831 form the GH18 domain; it reads YRKVGFYEGF…STSWTKFTSD (371 aa). The active-site Proton donor is glutamate 582. Chitin contacts are provided by tyrosine 583 and tryptophan 808.

Belongs to the glycosyl hydrolase 18 family. Chitinase class V subfamily.

The catalysed reaction is Random endo-hydrolysis of N-acetyl-beta-D-glucosaminide (1-&gt;4)-beta-linkages in chitin and chitodextrins.. Its function is as follows. Probable chitinase involved in the degradation of chitin, a component of the cell walls of fungi and exoskeletal elements of some animals (including worms and arthropods). Might be involved in manipulation of host defenses for successful infection. The sequence is that of Probable chitinase LysM18 from Penicillium expansum (Blue mold rot fungus).